A 314-amino-acid polypeptide reads, in one-letter code: Probable cell division protein WhiA (314 aa).

The segment at residues 274–305 (SLAELGDRLEISKSGANHRMRKLKALEDMINA) is a DNA-binding region (H-T-H motif).

The protein belongs to the WhiA family.

In terms of biological role, involved in cell division and chromosome segregation. This is Probable cell division protein WhiA from Leuconostoc citreum (strain KM20).